A 305-amino-acid chain; its full sequence is uncharacterized protein (305 aa).

Residues 1-29 (MSKAVSEILGYMYIFGIVMAVLAIVFVQV) form the signal peptide.

This is an uncharacterized protein from Archaeoglobus fulgidus (strain ATCC 49558 / DSM 4304 / JCM 9628 / NBRC 100126 / VC-16).